The following is a 349-amino-acid chain: Very-long-chain 3-oxoacyl-CoA reductase (349 aa).

A helical transmembrane segment spans residues 29 to 49 (AASLVFATGGLFLLSRGLSFL). 8 residues coordinate NADP(+): Leu-74, Asp-129, Asp-137, Asn-156, Tyr-223, Lys-227, Val-256, and Ser-258. The active-site Proton donor is the Tyr-223. Residue Lys-227 is the Lowers pKa of active site Tyr of the active site.

Belongs to the short-chain dehydrogenases/reductases (SDR) family.

The protein resides in the endoplasmic reticulum membrane. It carries out the reaction a very-long-chain (3R)-3-hydroxyacyl-CoA + NADP(+) = a very-long-chain 3-oxoacyl-CoA + NADPH + H(+). Its pathway is lipid metabolism; fatty acid biosynthesis. Component of the microsomal membrane bound fatty acid elongation system, which produces the 26-carbon very long-chain fatty acids (VLCFA) from palmitate. Catalyzes the reduction of the 3-ketoacyl-CoA intermediate that is formed in each cycle of fatty acid elongation. VLCFAs serve as precursors for ceramide and sphingolipids. The sequence is that of Very-long-chain 3-oxoacyl-CoA reductase from Coccidioides immitis (strain RS) (Valley fever fungus).